The sequence spans 151 residues: Cysteine proteinase inhibitor 10 (151 aa).

Residues methionine 1–glycine 22 form the signal peptide. A Cystatin domain is found at glycine 40–alanine 109. A Secondary area of contact motif is present at residues glutamine 96 to glycine 100.

It belongs to the cystatin family. Phytocystatin subfamily.

The protein localises to the secreted. Its function is as follows. Specific inhibitor of cysteine proteinases. Probably involved in the regulation of endogenous processes and in defense against pests and pathogens. This Oryza sativa subsp. indica (Rice) protein is Cysteine proteinase inhibitor 10.